A 502-amino-acid polypeptide reads, in one-letter code: Chlorophyllide reductase 52.5 kDa chain (502 aa).

A run of 3 helical transmembrane segments spans residues Val70–Val87, Ala131–Leu147, and Val221–Val238.

It belongs to the BchN/ChlN family. Chlorophyllide reductase is composed of three subunits; BchX, BchY and BchZ. Forms a heterodimer of one BchY and one BchZ subunit.

The protein localises to the cell membrane. It carries out the reaction 3-deacetyl-3-vinylbacteriochlorophyllide a + 2 oxidized [2Fe-2S]-[ferredoxin] + ADP + phosphate = chlorophyllide a + 2 reduced [2Fe-2S]-[ferredoxin] + ATP + H2O + H(+). The enzyme catalyses bacteriochlorophyllide a + 2 oxidized [2Fe-2S]-[ferredoxin] + ADP + phosphate = 3-acetyl-3-devinylchlorophyllide a + 2 reduced [2Fe-2S]-[ferredoxin] + ATP + H2O + H(+). The catalysed reaction is 3-deacetyl-3-(1-hydroxyethyl)bacteriochlorophyllide a + 2 oxidized [2Fe-2S]-[ferredoxin] + ADP + phosphate = 3-devinyl-3-(1-hydroxyethyl)chlorophyllide a + 2 reduced [2Fe-2S]-[ferredoxin] + ATP + H2O + H(+). The protein operates within porphyrin-containing compound metabolism; bacteriochlorophyll biosynthesis (light-independent). Its function is as follows. Converts chlorophylls (Chl) into bacteriochlorophylls (BChl) by reducing ring B of the tetrapyrrole. The chain is Chlorophyllide reductase 52.5 kDa chain (bchY) from Cereibacter sphaeroides (strain ATCC 17023 / DSM 158 / JCM 6121 / CCUG 31486 / LMG 2827 / NBRC 12203 / NCIMB 8253 / ATH 2.4.1.) (Rhodobacter sphaeroides).